The chain runs to 570 residues: Urease subunit alpha (570 aa).

The Urease domain occupies 131–570; the sequence is GGVDTHIHFI…LPMAQRYFLF (440 aa). Ni(2+)-binding residues include H136, H138, and K219. The residue at position 219 (K219) is an N6-carboxylysine. Position 221 (H221) interacts with substrate. H248 and H274 together coordinate Ni(2+). The Proton donor role is filled by H322. D362 is a binding site for Ni(2+).

The protein belongs to the metallo-dependent hydrolases superfamily. Urease alpha subunit family. In terms of assembly, heterotrimer of UreA (gamma), UreB (beta) and UreC (alpha) subunits. Three heterotrimers associate to form the active enzyme. The cofactor is Ni cation. Post-translationally, carboxylation allows a single lysine to coordinate two nickel ions.

The protein localises to the cytoplasm. It carries out the reaction urea + 2 H2O + H(+) = hydrogencarbonate + 2 NH4(+). It functions in the pathway nitrogen metabolism; urea degradation; CO(2) and NH(3) from urea (urease route): step 1/1. In Methylocella silvestris (strain DSM 15510 / CIP 108128 / LMG 27833 / NCIMB 13906 / BL2), this protein is Urease subunit alpha.